We begin with the raw amino-acid sequence, 113 residues long: Large ribosomal subunit protein uL22 (113 aa).

Belongs to the universal ribosomal protein uL22 family. Part of the 50S ribosomal subunit.

Functionally, this protein binds specifically to 23S rRNA; its binding is stimulated by other ribosomal proteins, e.g. L4, L17, and L20. It is important during the early stages of 50S assembly. It makes multiple contacts with different domains of the 23S rRNA in the assembled 50S subunit and ribosome. Its function is as follows. The globular domain of the protein is located near the polypeptide exit tunnel on the outside of the subunit, while an extended beta-hairpin is found that lines the wall of the exit tunnel in the center of the 70S ribosome. This is Large ribosomal subunit protein uL22 from Thermus thermophilus (strain ATCC BAA-163 / DSM 7039 / HB27).